The following is a 447-amino-acid chain: MTKRVTIIDVKDYVGQEVTIGAWVANKSGKGKIAFLQLRDGTAFFQGVAFKPNFVEKFGEEVGLEKFDVIKRLSQETSVYVTGIVKEDERSKFGYELDITDIEVIGESQDYPITPKEHGTDFLMDNRHLWLRSRKQVAVLQIRNAIIYVTYEFFDKNGFMKFDSPILSGNAAEDSTELFETDYFGTPAYLSQSGQLYLEAGAMALGRVFDFGPVFRAEKSKTRRHLTEFWMMDAEYSYLTHDESLDLQEAYVKALLQGVLDRAPQALETLERDTELLKRYIAEPFKRITYDQAIDLLQEHENDEDADYEHLEHGDDFGSPHETWISNHFGVPTFVMNYPAAIKAFYMKPVPGNPERVLCADLLAPEGYGEIIGGSMREEDYDALVAKMDELGMDRTEYEFYLDLRKYGTVPHGGFGIGIERMVTFAAGTKHIREAIPFPRMLHRIKP.

The protein belongs to the class-II aminoacyl-tRNA synthetase family. As to quaternary structure, homodimer.

Its subcellular location is the cytoplasm. The catalysed reaction is tRNA(Asn) + L-asparagine + ATP = L-asparaginyl-tRNA(Asn) + AMP + diphosphate + H(+). This is Asparagine--tRNA ligase from Streptococcus pneumoniae (strain ATCC BAA-255 / R6).